We begin with the raw amino-acid sequence, 297 residues long: Formylmethanofuran--tetrahydromethanopterin formyltransferase (297 aa).

It belongs to the FTR family. As to quaternary structure, homotetramer.

Its subcellular location is the cytoplasm. It carries out the reaction N-formylmethanofuran + 5,6,7,8-tetrahydromethanopterin + H(+) = N(5)-formyl-5,6,7,8-tetrahydromethanopterin + methanofuran. The protein operates within one-carbon metabolism; methanogenesis from CO(2); 5,10-methenyl-5,6,7,8-tetrahydromethanopterin from CO(2): step 2/3. Its function is as follows. Catalyzes the reversible transfer of a formyl group from formylmethanofuran (formyl-MFR) to tetrahydromethanopterin (H(4)MPT) to produce 5-formyl tetrahydromethanopterin (5-formyl-H(4)MPT) and methanofuran (MFR). The protein is Formylmethanofuran--tetrahydromethanopterin formyltransferase of Methanothermus fervidus (strain ATCC 43054 / DSM 2088 / JCM 10308 / V24 S).